Here is a 344-residue protein sequence, read N- to C-terminus: Phosphoribosylformylglycinamidine cyclo-ligase (344 aa).

Belongs to the AIR synthase family.

The protein resides in the cytoplasm. It carries out the reaction 2-formamido-N(1)-(5-O-phospho-beta-D-ribosyl)acetamidine + ATP = 5-amino-1-(5-phospho-beta-D-ribosyl)imidazole + ADP + phosphate + H(+). Its pathway is purine metabolism; IMP biosynthesis via de novo pathway; 5-amino-1-(5-phospho-D-ribosyl)imidazole from N(2)-formyl-N(1)-(5-phospho-D-ribosyl)glycinamide: step 2/2. This is Phosphoribosylformylglycinamidine cyclo-ligase from Exiguobacterium sp. (strain ATCC BAA-1283 / AT1b).